We begin with the raw amino-acid sequence, 565 residues long: UvrABC system protein C (565 aa).

Positions 12-89 (EEPGVYIFKN…IRTHKPKYNV (78 aa)) constitute a GIY-YIG domain. The UVR domain maps to 195 to 230 (KDVLPTLYEKIEQYASNLAFEKAAFLRDQVLVLQNI).

The protein belongs to the UvrC family. In terms of assembly, interacts with UvrB in an incision complex.

The protein resides in the cytoplasm. The UvrABC repair system catalyzes the recognition and processing of DNA lesions. UvrC both incises the 5' and 3' sides of the lesion. The N-terminal half is responsible for the 3' incision and the C-terminal half is responsible for the 5' incision. The polypeptide is UvrABC system protein C (Hydrogenobaculum sp. (strain Y04AAS1)).